A 363-amino-acid chain; its full sequence is MQVTAPRTLLLLLSAALALTETWAGSHSMRYFHTAMSRPGRGEPRFITVGYVDDTQFVWFDSDAASPRKEPRTPWIEQEGPEYWDRETQISKTNTQTYRVGLGTLRGYYNQSEDGSHTIQRMYGCDMGPDGRLLRGYSQLAYDGKDYLALNEDLSSWTAADTAAQITQRKWEAARAAEQERAYLEGLCVEWLRRYLENGKETLQRADPPKTHVTHHPISDHEATLRCWALGFYPAEITLTWQRDGEDQTQDTELVETRPAGDRTFQKWAAVVVPSGEEQRYTCRVQHEGLPEPLTLRWEPSSQSTIPIVGIVAGLAVLVVTVAVVAVVAAVMCRRKSSGGKGGSYSQAASSDSAQGSDVSLTA.

Positions 1 to 24 (MQVTAPRTLLLLLSAALALTETWA) are cleaved as a signal peptide. The interval 25 to 114 (GSHSMRYFHT…LRGYYNQSED (90 aa)) is alpha-1. Residues 25 to 308 (GSHSMRYFHT…EPSSQSTIPI (284 aa)) lie on the Extracellular side of the membrane. Asn110 is a glycosylation site (N-linked (GlcNAc...) asparagine). The tract at residues 115-206 (GSHTIQRMYG…ENGKETLQRA (92 aa)) is alpha-2. 2 disulfides stabilise this stretch: Cys125-Cys188 and Cys227-Cys283. The tract at residues 207-298 (DPPKTHVTHH…GLPEPLTLRW (92 aa)) is alpha-3. Residues 209–297 (PKTHVTHHPI…EGLPEPLTLR (89 aa)) form the Ig-like C1-type domain. The tract at residues 299 to 308 (EPSSQSTIPI) is connecting peptide. A helical transmembrane segment spans residues 309 to 333 (VGIVAGLAVLVVTVAVVAVVAAVMC). At 334 to 363 (RRKSSGGKGGSYSQAASSDSAQGSDVSLTA) the chain is on the cytoplasmic side. Residues 336–363 (KSSGGKGGSYSQAASSDSAQGSDVSLTA) are disordered. Residues 344–363 (SYSQAASSDSAQGSDVSLTA) show a composition bias toward low complexity.

The protein belongs to the MHC class I family. In terms of assembly, heterodimer of an alpha chain and a beta chain (beta-2-microglobulin).

The protein localises to the membrane. Its function is as follows. Involved in the presentation of foreign antigens to the immune system. The sequence is that of Class I histocompatibility antigen, Gogo-B*0201 alpha chain from Gorilla gorilla gorilla (Western lowland gorilla).